A 492-amino-acid polypeptide reads, in one-letter code: MDFWLYKQAQQNGHHIAITDGQESYTYQNLYCEASLLAKRLKAYQQSRVGLYIDNSIQSIILIHACWLANIEIAMINTRLTPNEMTNQMRSIDVQLIFCTLPLELRGFQIVSLDDIEFAGRDITTNGLLDNTMGIQYDTSNETVVPKESPSNILNTSFNLDDIASIMFTSGTTGPQKAVPQTFRNHYASAIGCKESLGFDRDTNWLSVLPIYHISGLSVLLRAVIEGFTVRIVDKFNAEQILTMIKNERITHISLVPQTLNWLMQQGLHEPYNLQKILLGGAKLSATMIETALQYNLPIYNSFGMTETCSQFLTATPEMLHARPDTVGMPSANVDVKIKNPNKEGHGELMIKGANVMNGYLYPTDLTGTFENGYFNTGDIAEIDHEGYVMIYDRRKDLIISGGENIYPYQIETVAKQFPGISDAVCVGHPDDTWGQVPKLYFVSESDISKAQLIAYLSKHLAKYKVPKHFEKVDTLPYTSTGKLQRNKLYRG.

Belongs to the ATP-dependent AMP-binding enzyme family. MenE subfamily.

The enzyme catalyses 2-succinylbenzoate + ATP + CoA = 2-succinylbenzoyl-CoA + AMP + diphosphate. The protein operates within quinol/quinone metabolism; 1,4-dihydroxy-2-naphthoate biosynthesis; 1,4-dihydroxy-2-naphthoate from chorismate: step 5/7. It participates in quinol/quinone metabolism; menaquinone biosynthesis. Functionally, converts 2-succinylbenzoate (OSB) to 2-succinylbenzoyl-CoA (OSB-CoA). The sequence is that of 2-succinylbenzoate--CoA ligase from Staphylococcus aureus (strain Mu3 / ATCC 700698).